A 116-amino-acid chain; its full sequence is Large ribosomal subunit protein uL18 (116 aa).

The protein belongs to the universal ribosomal protein uL18 family. Part of the 50S ribosomal subunit; part of the 5S rRNA/L5/L18/L25 subcomplex. Contacts the 5S and 23S rRNAs.

Functionally, this is one of the proteins that bind and probably mediate the attachment of the 5S RNA into the large ribosomal subunit, where it forms part of the central protuberance. The chain is Large ribosomal subunit protein uL18 from Novosphingobium aromaticivorans (strain ATCC 700278 / DSM 12444 / CCUG 56034 / CIP 105152 / NBRC 16084 / F199).